The following is a 1393-amino-acid chain: ABC transporter G family member 3 (1393 aa).

Residues 1 to 14 (MEDKNNIELQEKAP) are compositionally biased toward basic and acidic residues. The disordered stretch occupies residues 1-68 (MEDKNNIELQ…IIYQNPTPAS (68 aa)). Over residues 15 to 50 (DNYNNNNNNNNNNNNNNNNNNNNNNNNNNNNNNDIN) the composition is skewed to low complexity. Residues 100–353 (VSANNISYYI…YFSSIGLAPL (254 aa)) enclose the ABC transporter 1 domain. 144 to 151 (GIPGAGKS) serves as a coordination point for ATP. One can recognise an ABC transmembrane type-2 1 domain in the interval 473 to 698 (MQYAVRFFQA…SYADGGYQGN (226 aa)). Helical transmembrane passes span 479–499 (FFQA…MGFT), 509–529 (LVYF…EEFF), 558–578 (IPIS…IAGF), 585–605 (FIVF…IFQV), 615–635 (LASL…GYMI), 640–660 (IPGW…IDMV), and 724–744 (VDIV…FLGV). Positions 783-1035 (MTFQNLNYVV…VIQHFTSAGY (253 aa)) constitute an ABC transporter 2 domain. 828–835 (GPSGAGKS) is a binding site for ATP. The ABC transmembrane type-2 2 domain maps to 1121–1388 (QTILLRFLRS…FLGYLALRFI (268 aa)). The next 6 membrane-spanning stretches (helical) occupy residues 1122 to 1142 (TILL…TLFL), 1157 to 1177 (LVFL…PTIV), 1206 to 1226 (LPMM…LTGL), 1235 to 1255 (FFFS…LATL), 1265 to 1285 (IAIL…GFFI), and 1364 to 1384 (FYNL…GYLA).

The protein belongs to the ABC transporter superfamily. ABCG family. PDR (TC 3.A.1.205) subfamily.

It localises to the membrane. This Dictyostelium discoideum (Social amoeba) protein is ABC transporter G family member 3 (abcG3).